Reading from the N-terminus, the 294-residue chain is Protoheme IX farnesyltransferase (294 aa).

A run of 9 helical transmembrane segments spans residues V24–V44, L48–H68, A96–N116, L118–L138, N145–T165, A172–I192, G211–L231, W241–F263, and V268–L288.

This sequence belongs to the UbiA prenyltransferase family. Protoheme IX farnesyltransferase subfamily.

It is found in the cell inner membrane. The enzyme catalyses heme b + (2E,6E)-farnesyl diphosphate + H2O = Fe(II)-heme o + diphosphate. Its pathway is porphyrin-containing compound metabolism; heme O biosynthesis; heme O from protoheme: step 1/1. Its function is as follows. Converts heme B (protoheme IX) to heme O by substitution of the vinyl group on carbon 2 of heme B porphyrin ring with a hydroxyethyl farnesyl side group. The sequence is that of Protoheme IX farnesyltransferase from Legionella pneumophila (strain Lens).